The sequence spans 181 residues: Adenine phosphoribosyltransferase (181 aa).

Belongs to the purine/pyrimidine phosphoribosyltransferase family. In terms of assembly, homodimer.

Its subcellular location is the cytoplasm. It carries out the reaction AMP + diphosphate = 5-phospho-alpha-D-ribose 1-diphosphate + adenine. The protein operates within purine metabolism; AMP biosynthesis via salvage pathway; AMP from adenine: step 1/1. Its function is as follows. Catalyzes a salvage reaction resulting in the formation of AMP, that is energically less costly than de novo synthesis. In Methylobacterium nodulans (strain LMG 21967 / CNCM I-2342 / ORS 2060), this protein is Adenine phosphoribosyltransferase.